The primary structure comprises 286 residues: 4-diphosphocytidyl-2-C-methyl-D-erythritol kinase (286 aa).

Lys10 is a catalytic residue. 100–110 (PMGSGLGGGSS) serves as a coordination point for ATP. The active site involves Asp142.

This sequence belongs to the GHMP kinase family. IspE subfamily. Homodimer.

The catalysed reaction is 4-CDP-2-C-methyl-D-erythritol + ATP = 4-CDP-2-C-methyl-D-erythritol 2-phosphate + ADP + H(+). Its pathway is isoprenoid biosynthesis; isopentenyl diphosphate biosynthesis via DXP pathway; isopentenyl diphosphate from 1-deoxy-D-xylulose 5-phosphate: step 3/6. Functionally, catalyzes the phosphorylation of the position 2 hydroxy group of 4-diphosphocytidyl-2C-methyl-D-erythritol. The sequence is that of 4-diphosphocytidyl-2-C-methyl-D-erythritol kinase from Buchnera aphidicola subsp. Acyrthosiphon pisum (strain APS) (Acyrthosiphon pisum symbiotic bacterium).